The following is a 103-amino-acid chain: Large ribosomal subunit protein uL24 (103 aa).

It belongs to the universal ribosomal protein uL24 family. In terms of assembly, part of the 50S ribosomal subunit.

Functionally, one of two assembly initiator proteins, it binds directly to the 5'-end of the 23S rRNA, where it nucleates assembly of the 50S subunit. Its function is as follows. One of the proteins that surrounds the polypeptide exit tunnel on the outside of the subunit. This is Large ribosomal subunit protein uL24 from Dehalococcoides mccartyi (strain ATCC BAA-2266 / KCTC 15142 / 195) (Dehalococcoides ethenogenes (strain 195)).